The sequence spans 92 residues: Phospholemman (92 aa).

The first 20 residues, 1–20 (MASPGHILIVCVCLLSMASA), serve as a signal peptide directing secretion. Over 21 to 35 (EAPQEPDPFTYDYHT) the chain is Extracellular. A helical membrane pass occupies residues 36–56 (LRIGGLTIAGILFILGILIIL). The Cytoplasmic segment spans residues 57 to 92 (SKRCRCKFNQQQRTGEPDEEEGTFRSSIRRLSTRRR). The S-palmitoyl cysteine moiety is linked to residue Cys-60. Cys-62 is modified (S-glutathionyl cysteine; alternate). Cys-62 carries the S-palmitoyl cysteine; alternate lipid modification. The disordered stretch occupies residues 66-92 (QQQRTGEPDEEEGTFRSSIRRLSTRRR). Thr-79 is subject to Phosphothreonine. Ser-82 is subject to Phosphoserine. Position 83 is a phosphoserine; by PKA and PKC (Ser-83). Residues 83–92 (SIRRLSTRRR) show a composition bias toward basic residues. Position 88 is a phosphoserine; by PKA (Ser-88). Thr-89 carries the post-translational modification Phosphothreonine; by PKC.

Belongs to the FXYD family. As to quaternary structure, homotetramer. Monomer. Regulatory subunit of the sodium/potassium-transporting ATPase (NKA) which is composed of a catalytic alpha subunit, a non-catalytic beta subunit and an additional regulatory subunit. The monomeric form associates with NKA while the oligomeric form does not. Interacts with the catalytic alpha-1 subunit ATP1A1. Also interacts with the catalytic alpha-2 and alpha-3 subunits ATP1A2 and ATP1A3. Very little interaction with ATP1A1, ATP1A2 or ATP1A3 when phosphorylated at Ser-83. Interacts with the non-catalytic beta-1 subunit ATP1B1. Oxidative stress decreases interaction with ATP1A1 but increases interaction with ATP1B1. Major plasma membrane substrate for cAMP-dependent protein kinase (PKA) and protein kinase C (PKC) in several different tissues. Phosphorylated in response to insulin and adrenergic stimulation. Phosphorylation at Ser-88 stimulates sodium/potassium-transporting ATPase activity while the unphosphorylated form inhibits sodium/potassium-transporting ATPase activity. Phosphorylation increases tetramerization, decreases binding to ATP1A1 and reduces inhibition of ATP1A1 activity. Phosphorylation at Ser-83 leads to greatly reduced interaction with ATP1A1, ATP1A2 and ATP1A3. May be phosphorylated by DMPK. Post-translationally, palmitoylation increases half-life and stability and is enhanced upon phosphorylation at Ser-88 by PKA. In adult brain, highest levels are found in the cerebellum and in the lateral, third and fourth ventricles of the choroid plexus (at protein level). Also detected in cells of a portion of the ependymal lining of the lateral ventricle on its rostral surface posterior to the caudate putamen (at protein level). Expressed in a subset of neurons which secrete gonadotropin-releasing hormone.

Its subcellular location is the cell membrane. It is found in the sarcolemma. It localises to the apical cell membrane. The protein resides in the membrane. The protein localises to the caveola. Its subcellular location is the T-tubule. In terms of biological role, associates with and regulates the activity of the sodium/potassium-transporting ATPase (NKA) which transports Na(+) out of the cell and K(+) into the cell. Inhibits NKA activity in its unphosphorylated state and stimulates activity when phosphorylated. Reduces glutathionylation of the NKA beta-1 subunit ATP1B1, thus reversing glutathionylation-mediated inhibition of ATP1B1. Contributes to female sexual development by maintaining the excitability of neurons which secrete gonadotropin-releasing hormone. The sequence is that of Phospholemman from Rattus norvegicus (Rat).